The sequence spans 1114 residues: WD repeat-containing protein 72 (1114 aa).

WD repeat units lie at residues 15-54, 60-102, 160-197, 327-373, 413-452, 470-515, and 566-605; these read APPH…KISA, GHSA…CVEK, KCMC…NSIQ, EENK…SKFD, GMTA…KAGL, GHHQ…ILHT, and KHLF…LERH. Disordered regions lie at residues 634–658 and 749–798; these read SETH…VPCP and SLQT…PPRK. A compositionally biased stretch (basic residues) spans 780-796; the sequence is KRQKKMKSSKKAHPKPP. S1093 and S1095 each carry phosphoserine.

As to expression, expressed in maturation stage ameloblasts (at protein level).

The protein localises to the cytoplasmic vesicle. In terms of biological role, plays a major role in formation of tooth enamel. Specifically required during the maturation phase of amelogenesis for normal formation of the enamel matrix and clearance of enamel proteins. May be involved in localization of the calcium transporter SLC24A4 to the ameloblast cell membrane. The chain is WD repeat-containing protein 72 from Mus musculus (Mouse).